The sequence spans 419 residues: NF-kappa-B essential modulator (419 aa).

Positions 1–48 are disordered; that stretch reads MSRPPWKSPLCEMVQPSGSPAGDQDMLGEESSLGKPAMLHVPSEQGTP. Residues 1–197 are required for interaction with and ubiquitination by MARCHF2; sequence MSRPPWKSPL…REALEQRHSV (197 aa). 2 positions are modified to phosphoserine; by IKKB: serine 31 and serine 43. Residues 44–111 form an interaction with CHUK/IKBKB region; that stretch reads EQGTPETFQR…DLVVRLSLEK (68 aa). A coiled-coil region spans residues 49 to 353; the sequence is ETFQRCLEEN…KTSCQESARI (305 aa). A Phosphoserine modification is found at serine 68. Glycyl lysine isopeptide (Lys-Gly) (interchain with G-Cter in ubiquitin) cross-links involve residues lysine 111, lysine 139, lysine 143, lysine 226, lysine 246, and lysine 264. Positions 150 to 257 are interaction with TANK; the sequence is LGELQESQSR…SMVSSERNRG (108 aa). A ubiquitin-binding (UBAN) region spans residues 242–350; sequence DNHMKSSMVS…SRLKTSCQES (109 aa). The segment at 246–365 is self-association; the sequence is KSSMVSSERN…MRKRHVEVSQ (120 aa). Residues 251 to 419 are required for interaction with TNFAIP3; the sequence is SSERNRGLQL…LQIHVMECIE (169 aa). Lysine 277 participates in a covalent cross-link: Glycyl lysine isopeptide (Lys-Gly) (interchain with G-Cter in SUMO); alternate. A Glycyl lysine isopeptide (Lys-Gly) (interchain with G-Cter in ubiquitin); alternate cross-link involves residue lysine 277. Glycyl lysine isopeptide (Lys-Gly) (interchain with G-Cter in ubiquitin) cross-links involve residues lysine 283, lysine 285, lysine 292, and lysine 302. Lysine 309 participates in a covalent cross-link: Glycyl lysine isopeptide (Lys-Gly) (interchain with G-Cter in SUMO); alternate. Residue lysine 309 forms a Glycyl lysine isopeptide (Lys-Gly) (interchain with G-Cter in ubiquitin); alternate linkage. Residues lysine 321, lysine 325, and lysine 326 each participate in a glycyl lysine isopeptide (Lys-Gly) (interchain with G-Cter in ubiquitin) cross-link. The leucine-zipper stretch occupies residues 322–343; sequence LAEKKEFLQEQLEQLQREYSRL. The tract at residues 356–394 is disordered; sequence MRKRHVEVSQPPLAPGPAHHSFHLNPSSQRRSPPDEPPK. Serine 376 carries the post-translational modification Phosphoserine; by IKKB. Residues 382 to 419 form an interaction with CYLD region; sequence SSQRRSPPDEPPKFCCPKCQYQAPDIDTLQIHVMECIE. Serine 387 is modified (phosphoserine). The segment at 389-419 adopts a CCHC NOA-type zinc-finger fold; it reads PDEPPKFCCPKCQYQAPDIDTLQIHVMECIE. Cysteine 397 lines the Zn(2+) pocket. Lysine 399 participates in a covalent cross-link: Glycyl lysine isopeptide (Lys-Gly) (interchain with G-Cter in ubiquitin). The Zn(2+) site is built by cysteine 400, histidine 413, and cysteine 417.

As to quaternary structure, homodimer; disulfide-linked. Component of the I-kappa-B-kinase (IKK) core complex consisting of CHUK, IKBKB and IKBKG; probably four alpha/CHUK-beta/IKBKB dimers are associated with four gamma/IKBKG subunits. The IKK core complex seems to associate with regulatory or adapter proteins to form a IKK-signalosome holo-complex. The IKK complex associates with TERF2IP/RAP1, leading to promote IKK-mediated phosphorylation of RELA/p65. Part of a complex composed of NCOA2, NCOA3, CHUK/IKKA, IKBKB, IKBKG and CREBBP. Interacts with COPS3, CYLD, NALP2, TRPC4AP and PIDD1. Interacts with ATM; the complex is exported from the nucleus. Interacts with TRAF6. Interacts with IKBKE. Interacts with TANK; the interaction is enhanced by IKBKE and TBK1. Part of a ternary complex consisting of TANK, IKBKB and IKBKG. Interacts with ZFAND5. Interacts with RIPK2. Interacts with TNIP1 and TNFAIP3; TNIP1 facilitates the TNFAIP3-mediated de-ubiquitination of IKBKG. Interacts with TNFAIP3; the interaction is induced by TNF stimulation and by polyubiquitin. Binds (via UBAN region) polyubiquitin; binds both 'Lys-63'-linked and linear polyubiquitin, with higher affinity for linear ubiquitin. Interacts with NLRP10. Interacts with TANK; this interaction increases in response to DNA damage. Interacts with USP10; this interaction increases in response to DNA damage. Interacts with ZC3H12A; this interaction increases in response to DNA damage. Interacts with IFIT5; the interaction synergizes the recruitment of IKK to MAP3K7 and enhances IKK phosphorylation. Interacts with TRIM29; this interaction induces IKBKG/NEMO ubiquitination and proteolytic degradation. Interacts with TRIM13; this interaction leads to IKBKG/NEMO ubiquitination. Interacts with ARFIP2. Interacts with RIPK1. Interacts with (ubiquitinated) BCL10; interaction with polyubiquitinated BCL10 via both 'Lys-63'-linked and linear ubiquitin is required for TCR-induced NF-kappa-B activation. Interacts with MARCHF2; during the late stages of macrophage viral and bacterial infection; the interaction leads to ubiquitination and degradation of IKBKG/NEMO. Post-translationally, phosphorylation at Ser-68 attenuates aminoterminal homodimerization. Polyubiquitinated on Lys-285 through 'Lys-63'; the ubiquitination is mediated downstream of NOD2 and RIPK2 and probably plays a role in signaling by facilitating interactions with ubiquitin domain-containing proteins and activates the NF-kappa-B pathway. Polyubiquitinated on Lys-399 through 'Lys-63'; the ubiquitination is mediated by BCL10, MALT1 and TRAF6 and probably plays a role in signaling by facilitating interactions with ubiquitin domain-containing proteins and activates the NF-kappa-B pathway. Monoubiquitinated on Lys-277 and Lys-309; promotes nuclear export. Polyubiquitinated through 'Lys-27' by TRIM23; involved in antiviral innate and inflammatory responses. Linear polyubiquitinated on Lys-111, Lys-143, Lys-226, Lys-246, Lys-264, Lys-277, Lys-285, Lys-292, Lys-302, Lys-309 and Lys-326; the head-to-tail polyubiquitination is mediated by the LUBAC complex and plays a key role in NF-kappa-B activation. Deubiquitinated by USP10 in a TANK-dependent and -independent manner, leading to the negative regulation of NF-kappa-B signaling upon DNA damage. Ubiquitinated at Lys-326 by MARCHF2 following bacterial and viral infection which leads to its degradation. Polyubiquitinated via 'Lys-29'-linked ubiquitin; leading to lysosomal degradation. In terms of processing, sumoylated on Lys-277 and Lys-309 with SUMO1. Post-translationally, neddylated by TRIM40, resulting in stabilization of NFKBIA and down-regulation of NF-kappa-B activity.

It is found in the cytoplasm. It localises to the nucleus. Its function is as follows. Regulatory subunit of the IKK core complex which phosphorylates inhibitors of NF-kappa-B thus leading to the dissociation of the inhibitor/NF-kappa-B complex and ultimately the degradation of the inhibitor. Its binding to scaffolding polyubiquitin plays a key role in IKK activation by multiple signaling receptor pathways. Can recognize and bind both 'Lys-63'-linked and linear polyubiquitin upon cell stimulation, with a much highr affinity for linear polyubiquitin. Could be implicated in NF-kappa-B-mediated protection from cytokine toxicity. Essential for viral activation of IRF3. Involved in TLR3- and IFIH1-mediated antiviral innate response; this function requires 'Lys-27'-linked polyubiquitination. The sequence is that of NF-kappa-B essential modulator (IKBKG) from Bos taurus (Bovine).